The sequence spans 475 residues: Membrane-bound lytic murein transglycosylase F (475 aa).

Positions M1 to A15 are cleaved as a signal peptide. The interval A16–V258 is non-LT domain. Positions K259–P475 are LT domain. Residue E303 is part of the active site.

The protein in the N-terminal section; belongs to the bacterial solute-binding protein 3 family. In the C-terminal section; belongs to the transglycosylase Slt family.

It is found in the cell outer membrane. The catalysed reaction is Exolytic cleavage of the (1-&gt;4)-beta-glycosidic linkage between N-acetylmuramic acid (MurNAc) and N-acetylglucosamine (GlcNAc) residues in peptidoglycan, from either the reducing or the non-reducing ends of the peptidoglycan chains, with concomitant formation of a 1,6-anhydrobond in the MurNAc residue.. Its function is as follows. Murein-degrading enzyme that degrades murein glycan strands and insoluble, high-molecular weight murein sacculi, with the concomitant formation of a 1,6-anhydromuramoyl product. Lytic transglycosylases (LTs) play an integral role in the metabolism of the peptidoglycan (PG) sacculus. Their lytic action creates space within the PG sacculus to allow for its expansion as well as for the insertion of various structures such as secretion systems and flagella. The sequence is that of Membrane-bound lytic murein transglycosylase F from Shewanella halifaxensis (strain HAW-EB4).